The primary structure comprises 315 residues: COMPASS component SWD3 (315 aa).

6 WD repeats span residues 53 to 93 (SHAR…HTFI), 94 to 133 (GHTAPVISLTFNRKGNLLFTSSMDESIKIWDTLNGSLMKT), 136 to 178 (AHSE…KTLT), 187 to 228 (NGVV…RTFQ), 238 to 278 (HHSC…LLQL), and 285 to 315 (HHSSPVMSIHCFGNIMCSLALNGDCCLWRWV).

In terms of assembly, component of the Set1C/COMPASS complex which consists of SET1(2), BRE2(2), SPP1(2), SDC1(1), SHG1(1), SWD1(1), SWD2(1), and SWD3(1).

The protein localises to the nucleus. Its subcellular location is the chromosome. The protein resides in the telomere. Functionally, the COMPASS (Set1C) complex specifically mono-, di- and trimethylates histone H3 to form H3K4me1/2/3, which subsequently plays a role in telomere length maintenance and transcription elongation regulation. COMPASS recognizes ubiquitinated H2B on one face of the nucleosome which stimulates the methylation of H3 on the opposing face. SWD3/CPS30 establishes COMPASS trimethylation activity and may also serve as the anchor point to properly tether and space the other subunits. This Saccharomyces cerevisiae (strain ATCC 204508 / S288c) (Baker's yeast) protein is COMPASS component SWD3.